Reading from the N-terminus, the 783-residue chain is Tricorn protease-interacting factor F2 (783 aa).

Substrate is bound by residues glutamate 107 and 236-240 (GAMEN). Residue histidine 271 participates in Zn(2+) binding. Glutamate 272 serves as the catalytic Proton acceptor. Zn(2+) is bound by residues histidine 275 and glutamate 294.

It belongs to the peptidase M1 family. Monomer. Part of the Tricorn proteolytic complex. Zn(2+) serves as cofactor.

It is found in the cytoplasm. Functionally, proteases F1, F2 and F3 degrade oligopeptides produced by Tricorn (themselves probably produced by the proteasome), yielding free amino acids. The chain is Tricorn protease-interacting factor F2 (trf2) from Thermoplasma acidophilum (strain ATCC 25905 / DSM 1728 / JCM 9062 / NBRC 15155 / AMRC-C165).